The primary structure comprises 208 residues: MQHLAIFGGTFDPIHWGHLLIAEAALQQISIEKVIWVPSLNPPHKKASAFRHRLAMLQLATQDNPAFTVSSVEKNRSGVSYAINTLTDLSVCFPNTHWYWIVGLDTFQTLPRWYRGQELAPMCDWLIAPRLVGGENIAQSELICKQVKQQLRKQSNTIHWHLLHIPLVGVSSSLIRKLYRVGKSIRYLVPEDVRSYIADHKLYSEDSE.

Belongs to the NadD family.

The catalysed reaction is nicotinate beta-D-ribonucleotide + ATP + H(+) = deamido-NAD(+) + diphosphate. It functions in the pathway cofactor biosynthesis; NAD(+) biosynthesis; deamido-NAD(+) from nicotinate D-ribonucleotide: step 1/1. Functionally, catalyzes the reversible adenylation of nicotinate mononucleotide (NaMN) to nicotinic acid adenine dinucleotide (NaAD). This is Probable nicotinate-nucleotide adenylyltransferase from Trichormus variabilis (strain ATCC 29413 / PCC 7937) (Anabaena variabilis).